We begin with the raw amino-acid sequence, 427 residues long: Glutamate-1-semialdehyde 2,1-aminomutase (427 aa).

Lys265 is modified (N6-(pyridoxal phosphate)lysine).

It belongs to the class-III pyridoxal-phosphate-dependent aminotransferase family. HemL subfamily. As to quaternary structure, homodimer. It depends on pyridoxal 5'-phosphate as a cofactor.

It localises to the cytoplasm. It catalyses the reaction (S)-4-amino-5-oxopentanoate = 5-aminolevulinate. Its pathway is porphyrin-containing compound metabolism; protoporphyrin-IX biosynthesis; 5-aminolevulinate from L-glutamyl-tRNA(Glu): step 2/2. The polypeptide is Glutamate-1-semialdehyde 2,1-aminomutase (Pseudomonas aeruginosa (strain UCBPP-PA14)).